Reading from the N-terminus, the 144-residue chain is Large ribosomal subunit protein uL13 (144 aa).

The protein belongs to the universal ribosomal protein uL13 family. As to quaternary structure, part of the 50S ribosomal subunit.

Functionally, this protein is one of the early assembly proteins of the 50S ribosomal subunit, although it is not seen to bind rRNA by itself. It is important during the early stages of 50S assembly. This chain is Large ribosomal subunit protein uL13, found in Mycoplasmopsis agalactiae (strain NCTC 10123 / CIP 59.7 / PG2) (Mycoplasma agalactiae).